Reading from the N-terminus, the 177-residue chain is MSRQLNMDTLRQNFWKEEYLKEMMLRYEWQRKYGTLVKAKQKAKAASRLPRKLPTLLPQASVAPPPPASKTTPSKAPSPAPEPLFLSDMYPVAPNTKALLYEGISHDLQGRYQYLNTRKLDLPETRYLFPITTNFTYGWQLGPPTKQELVSCKMCRIESFFRKNGAFALLDPRDLAL.

The interval S47–A80 is disordered.

The sequence is that of Protein SPMIP1 (Spmip1) from Mus musculus (Mouse).